The chain runs to 261 residues: Global transcriptional regulator CodY (261 aa).

The segment at 1-159 (MPNLLEKTRK…ASTVVGIQLL (159 aa)) is GAF domain. The H-T-H motif DNA-binding region spans 207-226 (ASVIADRIGITRSVIVNALR).

The protein belongs to the CodY family.

The protein resides in the cytoplasm. DNA-binding global transcriptional regulator which is involved in the adaptive response to starvation and acts by directly or indirectly controlling the expression of numerous genes in response to nutrient availability. During rapid exponential growth, CodY is highly active and represses genes whose products allow adaptation to nutrient depletion. This Streptococcus agalactiae serotype III (strain NEM316) protein is Global transcriptional regulator CodY.